The sequence spans 310 residues: Putative S-adenosyl-L-methionine-dependent methyltransferase MUL_4762 (310 aa).

Residues Asp-132 and 161 to 162 each bind S-adenosyl-L-methionine; that span reads DL.

This sequence belongs to the UPF0677 family.

Exhibits S-adenosyl-L-methionine-dependent methyltransferase activity. This Mycobacterium ulcerans (strain Agy99) protein is Putative S-adenosyl-L-methionine-dependent methyltransferase MUL_4762.